The sequence spans 234 residues: Small ribosomal subunit protein uS2 (234 aa).

It belongs to the universal ribosomal protein uS2 family.

The chain is Small ribosomal subunit protein uS2 from Prochlorococcus marinus (strain MIT 9515).